We begin with the raw amino-acid sequence, 435 residues long: Zinc finger CCCH domain-containing protein 10 (435 aa).

The disordered stretch occupies residues methionine 1–alanine 36. A compositionally biased stretch (gly residues) spans glycine 12–glycine 35. C3H1-type zinc fingers lie at residues alanine 36–methionine 63, lysine 73–lysine 99, and lysine 134–arginine 161. The tract at residues aspartate 166–leucine 190 is disordered. Gly residues predominate over residues arginine 168–threonine 179. Omega-N-methylarginine occurs at positions 186 and 187. A coiled-coil region spans residues glycine 235–lysine 281. Polar residues predominate over residues threonine 315–glutamate 331. A disordered region spans residues threonine 315 to isoleucine 363. The segment covering alanine 340–leucine 359 has biased composition (pro residues).

It is found in the nucleus. In terms of biological role, specific regulator of miRNA biogenesis. Binds, via the C3H1-type zinc finger domains, to the binding motif 5'-GCAGCGC-3' on microRNA pri-MIR143 and negatively regulates the processing to mature microRNA. The chain is Zinc finger CCCH domain-containing protein 10 (Zc3h10) from Mus musculus (Mouse).